The following is a 443-amino-acid chain: D-alanyl-D-alanine carboxypeptidase DacA (443 aa).

The signal sequence occupies residues 1–31; the sequence is MNIKKCKQLLMSLVVLTLAVTCLAPMSKAKA. The active-site Acyl-ester intermediate is the Ser-67. The active-site Proton acceptor is Lys-70. The active site involves Ser-131. A substrate-binding site is contributed by Lys-258.

This sequence belongs to the peptidase S11 family.

It localises to the secreted. Its subcellular location is the cell wall. It is found in the cell membrane. The protein resides in the membrane raft. It catalyses the reaction Preferential cleavage: (Ac)2-L-Lys-D-Ala-|-D-Ala. Also transpeptidation of peptidyl-alanyl moieties that are N-acyl substituents of D-alanine.. It participates in cell wall biogenesis; peptidoglycan biosynthesis. In terms of biological role, removes C-terminal D-alanyl residues from sugar-peptide cell wall precursors. In Bacillus subtilis (strain 168), this protein is D-alanyl-D-alanine carboxypeptidase DacA (dacA).